We begin with the raw amino-acid sequence, 104 residues long: Large ribosomal subunit protein uL24 (104 aa).

It belongs to the universal ribosomal protein uL24 family. Part of the 50S ribosomal subunit.

Functionally, one of two assembly initiator proteins, it binds directly to the 5'-end of the 23S rRNA, where it nucleates assembly of the 50S subunit. Its function is as follows. One of the proteins that surrounds the polypeptide exit tunnel on the outside of the subunit. This Corynebacterium diphtheriae (strain ATCC 700971 / NCTC 13129 / Biotype gravis) protein is Large ribosomal subunit protein uL24.